Reading from the N-terminus, the 86-residue chain is RNA-binding protein Hfq (86 aa).

The 60-residue stretch at 9-68 folds into the Sm domain; sequence DPYLNTLRKEKVGVSIYLVNGIKLQGTIESFDQFVILLKNTVSQMVYKHAISTVVPVRPI.

The protein belongs to the Hfq family. Homohexamer.

In terms of biological role, RNA chaperone that binds small regulatory RNA (sRNAs) and mRNAs to facilitate mRNA translational regulation in response to envelope stress, environmental stress and changes in metabolite concentrations. Also binds with high specificity to tRNAs. This is RNA-binding protein Hfq from Pseudomonas fluorescens (strain ATCC BAA-477 / NRRL B-23932 / Pf-5).